Reading from the N-terminus, the 158-residue chain is Transcription elongation factor GreA (158 aa).

Belongs to the GreA/GreB family.

In terms of biological role, necessary for efficient RNA polymerase transcription elongation past template-encoded arresting sites. The arresting sites in DNA have the property of trapping a certain fraction of elongating RNA polymerases that pass through, resulting in locked ternary complexes. Cleavage of the nascent transcript by cleavage factors such as GreA or GreB allows the resumption of elongation from the new 3'terminus. GreA releases sequences of 2 to 3 nucleotides. This Psychrobacter arcticus (strain DSM 17307 / VKM B-2377 / 273-4) protein is Transcription elongation factor GreA.